Consider the following 396-residue polypeptide: Cystathionine beta-lyase (396 aa).

Position 211 is an N6-(pyridoxal phosphate)lysine (K211).

This sequence belongs to the trans-sulfuration enzymes family. In terms of assembly, homotetramer. The cofactor is pyridoxal 5'-phosphate.

The protein resides in the cytoplasm. The enzyme catalyses L,L-cystathionine + H2O = L-homocysteine + pyruvate + NH4(+). It carries out the reaction an S-substituted L-cysteine + H2O = a thiol + pyruvate + NH4(+). The protein operates within amino-acid biosynthesis; L-methionine biosynthesis via de novo pathway; L-homocysteine from L-cystathionine: step 1/1. Catalyzes the cleavage of cystathionine to homocysteine, pyruvate and ammonia during methionine biosynthesis. This Haemophilus influenzae (strain ATCC 51907 / DSM 11121 / KW20 / Rd) protein is Cystathionine beta-lyase (metC).